Here is an 889-residue protein sequence, read N- to C-terminus: TATA box-binding protein-associated factor RNA polymerase I subunit B (889 aa).

Residues 1-33 form an RRN7-type zinc finger; that stretch reads MAPETNEKCKACGGFNFSMIDGFKYCDRCGTLL. Residues cysteine 9, cysteine 12, cysteine 26, and cysteine 29 each coordinate Zn(2+). The interval 35–101 is B-reader; it reads NFEELEAEEG…DFFSRQALKN (67 aa). The interval 102 to 113 is B-linker; sequence DELAFPHESTPD. The tract at residues 114–351 is N-terminal cyclin fold; it reads YLYRLGLRLA…SAKEQETKEA (238 aa). The segment at 229–253 is disordered; that stretch reads NLDLDSEEDEEEEENPNLNKSMENL. Residues 230-243 are compositionally biased toward acidic residues; it reads LDLDSEEDEEEEEN. Residues 352-510 are C-terminal cyclin fold; it reads MTKVDYAEPY…LLVFRLTFDI (159 aa).

This sequence belongs to the RRN7/TAF1B family.

It is found in the nucleus. It localises to the nucleolus. Component of RNA polymerase I core factor complex that acts as a GTF2B/TFIIB-like factor and plays a key role in multiple steps during transcription initiation such as pre-initiation complex (PIC) assembly and postpolymerase recruitment events in polymerase I (Pol I) transcription. Binds rDNA promoters and plays a role in Pol I recruitment. This chain is TATA box-binding protein-associated factor RNA polymerase I subunit B, found in Caenorhabditis briggsae.